A 76-amino-acid polypeptide reads, in one-letter code: UPF0248 protein MmarC5_1387 (76 aa).

It belongs to the UPF0248 family.

The chain is UPF0248 protein MmarC5_1387 from Methanococcus maripaludis (strain C5 / ATCC BAA-1333).